A 272-amino-acid polypeptide reads, in one-letter code: 3-keto-5-aminohexanoate cleavage enzyme (272 aa).

E15 contributes to the (5S)-5-amino-3-oxohexanoate binding site. 2 residues coordinate Zn(2+): H47 and H49. (5S)-5-amino-3-oxohexanoate contacts are provided by S83, G86, and T107. E226 contacts Zn(2+).

The protein belongs to the BKACE family. Kce subfamily. As to quaternary structure, homotetramer. Zn(2+) serves as cofactor.

It carries out the reaction (5S)-5-amino-3-oxohexanoate + acetyl-CoA = (3S)-3-aminobutanoyl-CoA + acetoacetate. The protein operates within amino-acid degradation; L-lysine degradation via acetate pathway. Its activity is regulated as follows. 3-fold increase in activity by addition of 10 mM 2-mercaptoethanol. Addition of CoCl(2) and to a lesser extent MnCl(2) increases the activity but not MgCl(2). Inhibited by phosphate buffer but not by 5,5'-dithio-2-nitrobenzoic acid. Its function is as follows. Involved in the anaerobic fermentation of lysine. Catalyzes the reversible reaction between 3-keto-5-aminohexanoate (KAH) and acetyl-CoA to form 3-aminobutyryl-CoA and acetoacetate. The reaction involves the deprotonation of KAH, the nucleophilic addition onto acetyl-CoA and the intramolecular transfer of the CoA moiety. It can also use beta-alanyl-CoA as substrate. In Fusobacterium nucleatum subsp. nucleatum (strain ATCC 25586 / DSM 15643 / BCRC 10681 / CIP 101130 / JCM 8532 / KCTC 2640 / LMG 13131 / VPI 4355), this protein is 3-keto-5-aminohexanoate cleavage enzyme.